Here is a 532-residue protein sequence, read N- to C-terminus: Fatty-acid amide hydrolase 2 (532 aa).

The helical transmembrane segment at 11 to 31 threads the bilayer; that stretch reads LFLLRALGFLIGLVGRAALVL. Active-site charge relay system residues include K131 and S206. S230 functions as the Acyl-ester intermediate in the catalytic mechanism.

This sequence belongs to the amidase family. As to quaternary structure, homodimer. Expressed in kidney, liver, lung, prostate, heart and ovary.

The protein resides in the membrane. Its subcellular location is the lipid droplet. The enzyme catalyses N-(5Z,8Z,11Z,14Z-eicosatetraenoyl)-ethanolamine + H2O = ethanolamine + (5Z,8Z,11Z,14Z)-eicosatetraenoate. It carries out the reaction (9Z)-octadecenamide + H2O = (9Z)-octadecenoate + NH4(+). It catalyses the reaction N-(9Z-octadecenoyl) ethanolamine + H2O = ethanolamine + (9Z)-octadecenoate. The catalysed reaction is N-hexadecanoylethanolamine + H2O = ethanolamine + hexadecanoate. Inhibited by O-aryl carbamates and alpha-keto heterocytes. Catalyzes the hydrolysis of endogenous amidated lipids like the sleep-inducing lipid oleamide ((9Z)-octadecenamide), the endocannabinoid anandamide (N-(5Z,8Z,11Z,14Z-eicosatetraenoyl)-ethanolamine), as well as other fatty amides, to their corresponding fatty acids, thereby regulating the signaling functions of these molecules. Hydrolyzes monounsaturated substrate anandamide preferentially as compared to polyunsaturated substrates. This is Fatty-acid amide hydrolase 2 (FAAH2) from Homo sapiens (Human).